The primary structure comprises 380 residues: Glucose-1-phosphate adenylyltransferase (380 aa).

Residues glycine 164, 179–180, and serine 190 each bind alpha-D-glucose 1-phosphate; that span reads EK.

The protein belongs to the bacterial/plant glucose-1-phosphate adenylyltransferase family. In terms of assembly, homotetramer.

The catalysed reaction is alpha-D-glucose 1-phosphate + ATP + H(+) = ADP-alpha-D-glucose + diphosphate. The protein operates within glycan biosynthesis; glycogen biosynthesis. Its function is as follows. Involved in the biosynthesis of ADP-glucose, a building block required for the elongation reactions to produce glycogen. Catalyzes the reaction between ATP and alpha-D-glucose 1-phosphate (G1P) to produce pyrophosphate and ADP-Glc. In Ligilactobacillus salivarius (strain UCC118) (Lactobacillus salivarius), this protein is Glucose-1-phosphate adenylyltransferase.